A 496-amino-acid chain; its full sequence is RNA-binding motif protein, Y chromosome, family 1 member A1 (496 aa).

The region spanning 8 to 85 (GKLFIGGLNR…KAIKVEQAKK (78 aa)) is the RRM domain. Disordered stretches follow at residues 78–349 (IKVE…HRDY) and 452–496 (KDQR…SSRY). Low complexity-rich tracts occupy residues 97–114 (PASS…SARG) and 149–159 (PVKRGPSSRSG). Residues 175-184 (NSWMGSQGPM) are compositionally biased toward polar residues. 6 stretches are compositionally biased toward basic and acidic residues: residues 204-214 (RNDRMSTRHDG), 242-253 (DNGHSNRDEHSS), 276-289 (AYRD…DESY), 313-326 (GYRD…HESY), 335-349 (SSRE…HRDY), and 484-496 (GESR…SSRY).

Interacts with splicing factor proteins SFRS3/SRP20, TRA2B/SFRS10, KHDRBS1/SAM68 and KHDRBS3. Testis-specific.

The protein resides in the nucleus. In terms of biological role, RNA-binding protein involved in pre-mRNA splicing. Required for sperm development. Acts additively with TRA2B to promote exon 7 inclusion of the survival motor neuron SMN. Binds non-specifically to mRNAs. This chain is RNA-binding motif protein, Y chromosome, family 1 member A1 (RBMY1A1), found in Homo sapiens (Human).